A 150-amino-acid polypeptide reads, in one-letter code: Multiprotein-bridging factor 1 (150 aa).

The disordered stretch occupies residues 32-59 (LNAARRSGNVVGTEKKYGSTNTKSNPEG). A compositionally biased stretch (polar residues) spans 49–58 (GSTNTKSNPE). The HTH cro/C1-type domain maps to 85–139 (IQQARQEKKLTQKDLATKINEKPNVINDYEAGRAVPNQQLLGKLERALGVKLRGK). The segment at residues 96-115 (QKDLATKINEKPNVINDYEA) is a DNA-binding region (H-T-H motif).

This sequence belongs to the MBF1 family.

Its function is as follows. Transcriptional coactivator that stimulates GCN4-dependent transcriptional activity by bridging the DNA-binding region of GCN4 and TBP (SPT15), thereby recruiting TBP to GCN4-bound promoters. Involved in induction of the ribosome quality control (RQC) pathway; a pathway that degrades nascent peptide chains during problematic translation. Required to prevent stalled ribosomes from frameshifting. The polypeptide is Multiprotein-bridging factor 1 (MBF1) (Debaryomyces hansenii (strain ATCC 36239 / CBS 767 / BCRC 21394 / JCM 1990 / NBRC 0083 / IGC 2968) (Yeast)).